The sequence spans 378 residues: Chaperone protein DnaJ 2 (378 aa).

A J domain is found at 4-68 (DYYAVLGVRR…QKKQVYDLGG (65 aa)). The CR-type zinc-finger motif lies at 130–212 (GTTKDIQVET…CAGDGRVRSR (83 aa)). 8 residues coordinate Zn(2+): Cys-143, Cys-146, Cys-160, Cys-163, Cys-186, Cys-189, Cys-200, and Cys-203. CXXCXGXG motif repeat units lie at residues 143–150 (CTTCSGEG), 160–167 (CDMCRGRG), 186–193 (CPQCQGFG), and 200–207 (CPECAGDG). The interval 351 to 378 (RGEERPTGQFQPGQQGLFSRLKDAFNGR) is disordered. Residues 358–367 (GQFQPGQQGL) show a composition bias toward polar residues.

This sequence belongs to the DnaJ family. In terms of assembly, homodimer. Requires Zn(2+) as cofactor.

The protein localises to the cytoplasm. Its function is as follows. Participates actively in the response to hyperosmotic and heat shock by preventing the aggregation of stress-denatured proteins and by disaggregating proteins, also in an autonomous, DnaK-independent fashion. Unfolded proteins bind initially to DnaJ; upon interaction with the DnaJ-bound protein, DnaK hydrolyzes its bound ATP, resulting in the formation of a stable complex. GrpE releases ADP from DnaK; ATP binding to DnaK triggers the release of the substrate protein, thus completing the reaction cycle. Several rounds of ATP-dependent interactions between DnaJ, DnaK and GrpE are required for fully efficient folding. Also involved, together with DnaK and GrpE, in the DNA replication of plasmids through activation of initiation proteins. This is Chaperone protein DnaJ 2 from Streptomyces avermitilis (strain ATCC 31267 / DSM 46492 / JCM 5070 / NBRC 14893 / NCIMB 12804 / NRRL 8165 / MA-4680).